Reading from the N-terminus, the 107-residue chain is Histone H4 (107 aa).

Gly residues predominate over residues 1–16; it reads MPGRGKGGKGGKGYGK. Residues 1-23 are disordered; the sequence is MPGRGKGGKGGKGYGKVGAKRHA. A DNA-binding region spans residues 17–21; the sequence is VGAKR.

This sequence belongs to the histone H4 family. As to quaternary structure, the nucleosome is a histone octamer containing two molecules each of H2A, H2B, H3 and H4 assembled in one H3-H4 heterotetramer and two H2A-H2B heterodimers. The octamer wraps approximately 147 bp of DNA.

The protein localises to the nucleus. It is found in the chromosome. Functionally, core component of nucleosome. Nucleosomes wrap and compact DNA into chromatin, limiting DNA accessibility to the cellular machineries which require DNA as a template. Histones thereby play a central role in transcription regulation, DNA repair, DNA replication and chromosomal stability. DNA accessibility is regulated via a complex set of post-translational modifications of histones, also called histone code, and nucleosome remodeling. In Euplotes crassus, this protein is Histone H4.